The following is a 219-amino-acid chain: Small ribosomal subunit protein uS3 (219 aa).

Positions 38–106 constitute a KH type-2 domain; that stretch reads IREYIENRLK…RVHINIFEVK (69 aa).

This sequence belongs to the universal ribosomal protein uS3 family. In terms of assembly, part of the 30S ribosomal subunit. Forms a tight complex with proteins S10 and S14.

Binds the lower part of the 30S subunit head. Binds mRNA in the 70S ribosome, positioning it for translation. The polypeptide is Small ribosomal subunit protein uS3 (Halalkalibacterium halodurans (strain ATCC BAA-125 / DSM 18197 / FERM 7344 / JCM 9153 / C-125) (Bacillus halodurans)).